A 194-amino-acid polypeptide reads, in one-letter code: MARAYRLGEDLGTGAKCVKFLINLASTPSMAVVPTAVELCIQAAVDDPVGEARWQSWFDQWLLELQSAGAVELTLRLTDDAEIRRLNARFRGVDAPTDVLSFEFEADDTQALIAEEPLYLGDIVVSVPTATRQAREFGHTLEVELAWLAVHGLLHLLGWDHPDEQSWRAMVTQQARLLKGVNVVYDWPSVYPVG.

3 residues coordinate Zn(2+): histidine 151, histidine 155, and histidine 161.

It belongs to the endoribonuclease YbeY family. Zn(2+) is required as a cofactor.

Its subcellular location is the cytoplasm. Its function is as follows. Single strand-specific metallo-endoribonuclease involved in late-stage 70S ribosome quality control and in maturation of the 3' terminus of the 16S rRNA. This chain is Endoribonuclease YbeY, found in Gloeobacter violaceus (strain ATCC 29082 / PCC 7421).